The primary structure comprises 313 residues: Biotin synthase (313 aa).

The region spanning 28–258 (NFGNDIELCS…LFPQARLRLS (231 aa)) is the Radical SAM core domain. [4Fe-4S] cluster-binding residues include cysteine 46, cysteine 50, and cysteine 53. [2Fe-2S] cluster-binding residues include cysteine 90, cysteine 121, cysteine 181, and arginine 256.

The protein belongs to the radical SAM superfamily. Biotin synthase family. Homodimer. The cofactor is [4Fe-4S] cluster. It depends on [2Fe-2S] cluster as a cofactor.

The enzyme catalyses (4R,5S)-dethiobiotin + (sulfur carrier)-SH + 2 reduced [2Fe-2S]-[ferredoxin] + 2 S-adenosyl-L-methionine = (sulfur carrier)-H + biotin + 2 5'-deoxyadenosine + 2 L-methionine + 2 oxidized [2Fe-2S]-[ferredoxin]. The protein operates within cofactor biosynthesis; biotin biosynthesis; biotin from 7,8-diaminononanoate: step 2/2. Catalyzes the conversion of dethiobiotin (DTB) to biotin by the insertion of a sulfur atom into dethiobiotin via a radical-based mechanism. This is Biotin synthase from Francisella tularensis subsp. tularensis (strain FSC 198).